Reading from the N-terminus, the 937-residue chain is Coiled-coil domain-containing protein 39 (937 aa).

Coiled-coil stretches lie at residues 16–137 (AIPV…CQMN), 165–339 (QQDD…KKDI), 365–615 (EKTL…SQIR), and 664–816 (VIKA…LKQT). The segment at 866–937 (LPTARGPSSR…NIPKEKKLSK (72 aa)) is disordered. Residues 873–887 (SSRSSSQSSSLSSFR) are compositionally biased toward low complexity. Ser888 and Ser896 each carry phosphoserine. The span at 915-928 (NDSSRSASSGSNSN) shows a compositional bias: low complexity.

This sequence belongs to the CCDC39 family. In terms of tissue distribution, strongly expressed in tissues rich in ciliated cells. Expressed in olfactory and vomeronasal sensory neurons and the respiratory epithelium. Expressed in node cells carrying motile cilia, in upper and lower airways, and in ependymal and choroid plexus cells.

The protein localises to the cytoplasm. Its subcellular location is the cytoskeleton. The protein resides in the cilium axoneme. Functionally, required for assembly of dynein regulatory complex (DRC) and inner dynein arm (IDA) complexes, which are responsible for ciliary beat regulation, thereby playing a central role in motility in cilia and flagella. Probably acts together with CCDC40 to form a molecular ruler that determines the 96 nanometer (nm) repeat length and arrangements of components in cilia and flagella. Not required for outer dynein arm complexes assembly. This chain is Coiled-coil domain-containing protein 39, found in Mus musculus (Mouse).